The chain runs to 119 residues: MYKPFDLRTIITIIIGCGILTAMFLLIGLVLCLYSKISKALKSPGIAKEADDECYIDPCKDPHESIILANSIPAEACHSYQANTIAVASCGPLQCCNVCGVYADVNSLPPCLCSIREGL.

The signal sequence occupies residues 1 to 40; it reads MYKPFDLRTIITIIIGCGILTAMFLLIGLVLCLYSKISKA.

Belongs to the FAM24 family.

It is found in the secreted. The sequence is that of Protein FAM24A-like from Mus musculus (Mouse).